A 908-amino-acid chain; its full sequence is Glutamate receptor ionotropic, kainate 2 (908 aa).

An N-terminal signal peptide occupies residues 1–31; that stretch reads MQRIAGITKMVTHRRWLGLLLLLLCVGYSHG. Residues 32-561 lie on the Extracellular side of the membrane; it reads MPHVLRFGGI…VFSFLNPLSP (530 aa). Residues asparagine 67, asparagine 73, asparagine 275, asparagine 378, asparagine 412, asparagine 423, and asparagine 430 are each glycosylated (N-linked (GlcNAc...) asparagine). Cysteine 96 and cysteine 347 are disulfide-bonded. L-glutamate is bound by residues proline 516, alanine 518, and arginine 523. A glycan (N-linked (GlcNAc...) asparagine) is linked at asparagine 546. The helical transmembrane segment at 562 to 582 threads the bilayer; that stretch reads DIWMYILLAYLGVSCVLFVIA. Topologically, residues 583 to 638 are cytoplasmic; that stretch reads RFSPYEWYNPHPCNPDSDVVENNFTLLNSFWFGVGALMQQGSELMPKALSTRIVGG. A helical membrane pass occupies residues 639–659; sequence IWWFFTLIIISSYTANLAAFL. Residues 660–819 lie on the Extracellular side of the membrane; the sequence is TVERMESPID…KEASALGVQN (160 aa). L-glutamate is bound by residues serine 689, threonine 690, and glutamate 738. Cysteine 750 and cysteine 804 form a disulfide bridge. N-linked (GlcNAc...) asparagine glycosylation is present at asparagine 751. A helical transmembrane segment spans residues 820–840; the sequence is IGGIFIVLAAGLVLSVFVAVG. Over 841-908 the chain is Cytoplasmic; sequence EFLYKSKQNA…RRLPGKETMA (68 aa).

The protein belongs to the glutamate-gated ion channel (TC 1.A.10.1) family. GRIK2 subfamily. Homotetramer and heterotetramer with GRIK5. Tetramers may be formed by the dimerization of dimers.

The protein localises to the cell membrane. The protein resides in the postsynaptic cell membrane. The enzyme catalyses Ca(2+)(in) = Ca(2+)(out). It catalyses the reaction Na(+)(in) = Na(+)(out). Cold receptor activity activated by temperatures between 10-19 degrees Celsius. In terms of biological role, ionotropic glutamate receptor that functions as a cation-permeable ligand-gated ion channel, gated by L-glutamate and the glutamatergic agonist kainic acid. L-glutamate acts as an excitatory neurotransmitter at many synapses in the central nervous system. Binding of the excitatory neurotransmitter L-glutamate induces a conformation change, leading to the opening of the cation channel, and thereby converts the chemical signal to an electrical impulse. The receptor then desensitizes rapidly and enters a transient inactive state, characterized by the presence of bound agonist. Functionally, independent of its ionotropic glutamate receptor activity, acts as a thermoreceptor conferring sensitivity to cold temperatures. Functions in dorsal root ganglion neurons. This is Glutamate receptor ionotropic, kainate 2 from Danio rerio (Zebrafish).